Reading from the N-terminus, the 243-residue chain is Variant surface antigen E (243 aa).

A signal peptide spans 1 to 29; sequence MKKSIFSKKLLVSFGSLVTLAAIPLIAIS. C30 is lipidated: N-palmitoyl cysteine. C30 is lipidated: S-diacylglycerol cysteine. The segment at 34-243 is disordered; sequence TDNLSQSQQP…TTSDGQNQNK (210 aa). Over residues 52–92 the composition is skewed to low complexity; sequence GTNTENGSNNGSGSGTTNSSGGTNQSGSASGNGSSNSSVST. Residues 93 to 243 show a composition bias toward polar residues; that stretch reads PDGQHSNPSN…TTSDGQNQNK (151 aa). Repeat copies occupy residues 97–109, 110–122, 123–135, 136–148, 149–161, 162–174, 175–187, 188–200, 201–213, 214–226, and 227–239. The tract at residues 97 to 239 is 11 X 13 AA tandem repeats; sequence HSNPSNPTTS…PSNPTTSDGQ (143 aa).

It is found in the cell membrane. Its function is as follows. Responsible for the antigenic diversity for host adaptation. Expression in E.coli of a construct containing vlpD, vlpE, and vlpF yields antigenically distinguishable products corresponding to each gene. The chain is Variant surface antigen E (vlpE) from Mesomycoplasma hyorhinis (Mycoplasma hyorhinis).